The following is a 444-amino-acid chain: Probable polygalacturonase At1g80170 (444 aa).

Residues 1–28 (MSYSRGGTLVTLLLLLVVASSLALTANA) form the signal peptide. PbH1 repeat units lie at residues 208-234 (CRRVTISGLKVIAPATSPNTDGIHISV), 235-256 (SRGIVIDNTTVSTGDDCISIVK), 258-278 (STQISISNIICGPGHGISIGS), 288-309 (VRDITVDTAIISDTANGVRIKT), 317-338 (VSKIIFRNIKMNNVSNPIIIDQ), and 351-378 (TSAISIENISFVHVRGTSASKEAIKISC). Residue Asp249 is the Proton donor of the active site. Residue His272 is part of the active site.

This sequence belongs to the glycosyl hydrolase 28 family. As to expression, expressed in young, mature and dehiscing anthers. Found in stems, but not in roots or in abscission zone of floral organs.

Its subcellular location is the secreted. The protein resides in the cell wall. The catalysed reaction is (1,4-alpha-D-galacturonosyl)n+m + H2O = (1,4-alpha-D-galacturonosyl)n + (1,4-alpha-D-galacturonosyl)m.. In Arabidopsis thaliana (Mouse-ear cress), this protein is Probable polygalacturonase At1g80170.